Reading from the N-terminus, the 445-residue chain is Methylthioribose-1-phosphate isomerase (445 aa).

The Proton donor role is filled by Asp286.

This sequence belongs to the eIF-2B alpha/beta/delta subunits family. MtnA subfamily.

The protein resides in the cytoplasm. Its subcellular location is the nucleus. The enzyme catalyses 5-(methylsulfanyl)-alpha-D-ribose 1-phosphate = 5-(methylsulfanyl)-D-ribulose 1-phosphate. It participates in amino-acid biosynthesis; L-methionine biosynthesis via salvage pathway; L-methionine from S-methyl-5-thio-alpha-D-ribose 1-phosphate: step 1/6. Functionally, catalyzes the interconversion of methylthioribose-1-phosphate (MTR-1-P) into methylthioribulose-1-phosphate (MTRu-1-P). This Sclerotinia sclerotiorum (strain ATCC 18683 / 1980 / Ss-1) (White mold) protein is Methylthioribose-1-phosphate isomerase (mri1).